Here is a 201-residue protein sequence, read N- to C-terminus: Alpha-1-acid glycoprotein (201 aa).

An N-terminal signal peptide occupies residues 1 to 18 (MALPWALAVLSLLPLLHA). N-linked (GlcNAc...) asparagine glycans are attached at residues asparagine 25, asparagine 33, asparagine 87, asparagine 93, asparagine 103, and asparagine 169. The cysteines at positions 90 and 183 are disulfide-linked.

Belongs to the calycin superfamily. Lipocalin family.

The protein resides in the secreted. In terms of biological role, functions as a transport protein in the blood stream. Binds various ligands in the interior of its beta-barrel domain. Appears to function in modulating the activity of the immune system during the acute-phase reaction. The chain is Alpha-1-acid glycoprotein (ORM1) from Oryctolagus cuniculus (Rabbit).